The following is a 453-amino-acid chain: Cobyrinate a,c-diamide synthase (453 aa).

Residues 250 to 440 form the GATase cobBQ-type domain; the sequence is RIAVPFDEAF…IHTHTACLPD (191 aa). Cysteine 332 acts as the Nucleophile in catalysis.

It belongs to the CobB/CbiA family. Mg(2+) serves as cofactor.

It carries out the reaction cob(II)yrinate + 2 L-glutamine + 2 ATP + 2 H2O = cob(II)yrinate a,c diamide + 2 L-glutamate + 2 ADP + 2 phosphate + 2 H(+). The catalysed reaction is Ni-sirohydrochlorin + 2 L-glutamine + 2 ATP + 2 H2O = Ni-sirohydrochlorin a,c-diamide + 2 L-glutamate + 2 ADP + 2 phosphate + 2 H(+). The protein operates within cofactor biosynthesis; adenosylcobalamin biosynthesis; cob(II)yrinate a,c-diamide from sirohydrochlorin (anaerobic route): step 10/10. In terms of biological role, catalyzes the ATP-dependent amidation of the two carboxylate groups at positions a and c of cobyrinate, using either L-glutamine or ammonia as the nitrogen source. Involved in the biosynthesis of the unique nickel-containing tetrapyrrole coenzyme F430, the prosthetic group of methyl-coenzyme M reductase (MCR), which plays a key role in methanogenesis and anaerobic methane oxidation. Catalyzes the ATP-dependent amidation of the two carboxylate groups at positions a and c of Ni-sirohydrochlorin, using L-glutamine or ammonia as the nitrogen source. The protein is Cobyrinate a,c-diamide synthase of Methanosphaera stadtmanae (strain ATCC 43021 / DSM 3091 / JCM 11832 / MCB-3).